The primary structure comprises 162 residues: D-beta-D-heptose 1-phosphate adenylyltransferase (162 aa).

The enzyme catalyses D-glycero-beta-D-manno-heptose 1-phosphate + ATP + H(+) = ADP-D-glycero-beta-D-manno-heptose + diphosphate. It participates in nucleotide-sugar biosynthesis; ADP-L-glycero-beta-D-manno-heptose biosynthesis; ADP-L-glycero-beta-D-manno-heptose from D-glycero-beta-D-manno-heptose 7-phosphate: step 3/4. Its pathway is bacterial outer membrane biogenesis; LPS core biosynthesis. Functionally, catalyzes the ADP transfer from ATP to D-glycero-beta-D-manno-heptose 1-phosphate, yielding ADP-D-glycero-beta-D-manno-heptose. Cannot use GTP, UTP, or CTP as substrate. Is not active against the alpha-anomer substrate. Is also able to catalyze the ADP transfer to beta-glucose 1-phosphate in vitro, yielding ADP-beta-glucose. This chain is D-beta-D-heptose 1-phosphate adenylyltransferase, found in Bordetella bronchiseptica (strain ATCC BAA-588 / NCTC 13252 / RB50) (Alcaligenes bronchisepticus).